The following is a 310-amino-acid chain: tRNA pseudouridine synthase B (310 aa).

Asp-47 (nucleophile) is an active-site residue.

Belongs to the pseudouridine synthase TruB family. Type 1 subfamily.

The enzyme catalyses uridine(55) in tRNA = pseudouridine(55) in tRNA. Responsible for synthesis of pseudouridine from uracil-55 in the psi GC loop of transfer RNAs. This Caulobacter sp. (strain K31) protein is tRNA pseudouridine synthase B.